The following is a 1403-amino-acid chain: E3 ubiquitin-protein ligase SNT2 (1403 aa).

The interval 40–62 is disordered; that stretch reads SGAKTKGSNSQTPRNCKRTSNPA. A compositionally biased stretch (polar residues) spans 45 to 62; sequence KGSNSQTPRNCKRTSNPA. The region spanning 121 to 258 is the BAH domain; that stretch reads VLLSANDTIY…RYTLKYYKVY (138 aa). The PHD-type 1 zinc-finger motif lies at 317 to 369; that stretch reads DKRCQFCKEWCIQKESLSCDECGVCAHLYCMDPPLDRKPNKDVVWTCFSCLQK. One can recognise an SANT domain in the interval 555-606; it reads LKEPSFTAVEIRKFEEAVEKFGSELRPVCEYVGTQPMSMIVRFYYNWKKTER. A PHD-type 2 zinc finger spans residues 1038–1097; sequence RTFCSVCKEKFNDNDNYEVVCGNCGLTVHYFCYAIKLPKDMKKNTNLKTFKWLCDPCSND. An RING-type; degenerate zinc finger spans residues 1041–1095; sequence CSVCKEKFNDNDNYEVVCGNCGLTVHYFCYAIKLPKDMKKNTNLKTFKWLCDPCS. The C2HC pre-PHD-type zinc-finger motif lies at 1105–1153; the sequence is TYQCSMCPTKDYDYDRYRSQSFKICPDALKCTSLGTWVHLVCSLFNEDI. Residues 1177–1231 form a PHD-type 3; degenerate zinc finger; sequence FTCGVCRINGGGLVKCNKCQYRYHITCAQNSSNFKLMFEKKNMSVDTTLPCIKDV.

Component of the Snt2C complex composed of SNT2, ECM5 and RPD3. Interacts with the E2 ubiquitin-conjugating enzyme UBC4 and histones H3 and H4. Binding is enhanced to methylated histone H3K36me3.

It is found in the cytoplasm. The protein resides in the nucleus. The enzyme catalyses S-ubiquitinyl-[E2 ubiquitin-conjugating enzyme]-L-cysteine + [acceptor protein]-L-lysine = [E2 ubiquitin-conjugating enzyme]-L-cysteine + N(6)-ubiquitinyl-[acceptor protein]-L-lysine.. Functionally, transcriptional regulator that, together with ECM5, recruits histone deacetylase RPD3 to a small number of promoters of stress-response genes in response to oxidative stress. Probable ubiquitin-protein ligase involved in the degradation-related ubiquitination of histones. Contributes to the post-translational regulation of histone protein levels by polyubiquitination of excess histones for subsequent degradation. The chain is E3 ubiquitin-protein ligase SNT2 from Saccharomyces cerevisiae (strain ATCC 204508 / S288c) (Baker's yeast).